A 395-amino-acid polypeptide reads, in one-letter code: F-box/kelch-repeat protein At3g13680 (395 aa).

One can recognise an F-box domain in the interval 1-47 (MTTMGDLPGDLVEEILSRVPLTSLRAIRSTCQKWNSLSKSQICGRKA). Kelch repeat units lie at residues 154 to 202 (ILRI…SLKG), 210 to 256 (KKET…VSLA), 265 to 314 (VLYQ…FIDE), and 337 to 383 (IVYI…LVQL).

This chain is F-box/kelch-repeat protein At3g13680, found in Arabidopsis thaliana (Mouse-ear cress).